The following is a 356-amino-acid chain: Holliday junction branch migration complex subunit RuvB (356 aa).

Positions 4-190 (TDKLAAERII…FGIVARLEFY (187 aa)) are large ATPase domain (RuvB-L). Residues Leu-29, Arg-30, Gly-71, Lys-74, Thr-75, Thr-76, 137–139 (EDY), Arg-180, Tyr-190, and Arg-227 contribute to the ATP site. Thr-75 serves as a coordination point for Mg(2+). The small ATPAse domain (RuvB-S) stretch occupies residues 191 to 261 (DAEQLSRIVR…VADAALAMLD (71 aa)). A head domain (RuvB-H) region spans residues 264-356 (PVGFDLMDRK…NLWDTPDAER (93 aa)). 3 residues coordinate DNA: Arg-300, Arg-319, and Arg-324.

It belongs to the RuvB family. As to quaternary structure, homohexamer. Forms an RuvA(8)-RuvB(12)-Holliday junction (HJ) complex. HJ DNA is sandwiched between 2 RuvA tetramers; dsDNA enters through RuvA and exits via RuvB. An RuvB hexamer assembles on each DNA strand where it exits the tetramer. Each RuvB hexamer is contacted by two RuvA subunits (via domain III) on 2 adjacent RuvB subunits; this complex drives branch migration. In the full resolvosome a probable DNA-RuvA(4)-RuvB(12)-RuvC(2) complex forms which resolves the HJ.

It is found in the cytoplasm. The catalysed reaction is ATP + H2O = ADP + phosphate + H(+). Functionally, the RuvA-RuvB-RuvC complex processes Holliday junction (HJ) DNA during genetic recombination and DNA repair, while the RuvA-RuvB complex plays an important role in the rescue of blocked DNA replication forks via replication fork reversal (RFR). RuvA specifically binds to HJ cruciform DNA, conferring on it an open structure. The RuvB hexamer acts as an ATP-dependent pump, pulling dsDNA into and through the RuvAB complex. RuvB forms 2 homohexamers on either side of HJ DNA bound by 1 or 2 RuvA tetramers; 4 subunits per hexamer contact DNA at a time. Coordinated motions by a converter formed by DNA-disengaged RuvB subunits stimulates ATP hydrolysis and nucleotide exchange. Immobilization of the converter enables RuvB to convert the ATP-contained energy into a lever motion, pulling 2 nucleotides of DNA out of the RuvA tetramer per ATP hydrolyzed, thus driving DNA branch migration. The RuvB motors rotate together with the DNA substrate, which together with the progressing nucleotide cycle form the mechanistic basis for DNA recombination by continuous HJ branch migration. Branch migration allows RuvC to scan DNA until it finds its consensus sequence, where it cleaves and resolves cruciform DNA. The protein is Holliday junction branch migration complex subunit RuvB of Burkholderia thailandensis (strain ATCC 700388 / DSM 13276 / CCUG 48851 / CIP 106301 / E264).